Consider the following 62-residue polypeptide: Sperm protamine P1 (62 aa).

The tract at residues Met-1 to Tyr-62 is disordered.

Belongs to the protamine P1 family. In terms of tissue distribution, testis.

The protein resides in the nucleus. It localises to the chromosome. Functionally, protamines substitute for histones in the chromatin of sperm during the haploid phase of spermatogenesis. They compact sperm DNA into a highly condensed, stable and inactive complex. The polypeptide is Sperm protamine P1 (PRM1) (Lagostrophus fasciatus (Banded hare-wallaby)).